We begin with the raw amino-acid sequence, 547 residues long: Chaperonin GroEL (547 aa).

Residues 30-33 (TLGP), Lys51, 87-91 (DGTTT), Gly415, 479-481 (DAA), and Asp495 each bind ATP.

The protein belongs to the chaperonin (HSP60) family. As to quaternary structure, forms a cylinder of 14 subunits composed of two heptameric rings stacked back-to-back. Interacts with the co-chaperonin GroES.

Its subcellular location is the cytoplasm. The catalysed reaction is ATP + H2O + a folded polypeptide = ADP + phosphate + an unfolded polypeptide.. Its function is as follows. Together with its co-chaperonin GroES, plays an essential role in assisting protein folding. The GroEL-GroES system forms a nano-cage that allows encapsulation of the non-native substrate proteins and provides a physical environment optimized to promote and accelerate protein folding. The polypeptide is Chaperonin GroEL (Dichelobacter nodosus (strain VCS1703A)).